Here is a 206-residue protein sequence, read N- to C-terminus: Ribosome maturation factor RimP (206 aa).

Positions 164-206 (GGIPEGRAVPSDAVDLTDDSGVDSVEDDEAELEDVENEEGFDK) are disordered. A compositionally biased stretch (acidic residues) spans 178 to 206 (DLTDDSGVDSVEDDEAELEDVENEEGFDK).

It belongs to the RimP family.

It localises to the cytoplasm. In terms of biological role, required for maturation of 30S ribosomal subunits. The chain is Ribosome maturation factor RimP from Rhodococcus erythropolis (strain PR4 / NBRC 100887).